We begin with the raw amino-acid sequence, 527 residues long: NADH-ubiquinone oxidoreductase chain 5 (527 aa).

14 helical membrane-spanning segments follow: residues 3–23, 43–63, 75–95, 98–118, 141–161, 168–188, 197–217, 226–246, 263–283, 318–338, 357–377, 398–418, 432–452, and 507–527; these read ISIF…WLMP, FYFN…SVLV, FNYY…LNFS, IFTM…LVLF, FMFV…SFSM, LLLL…SWLP, VSSL…LMNF, FISF…LASL, MGFS…IHLV, LPNF…GLIF, YMMF…GYSF, VFMN…LWWM, VDFF…FLIL, and YLKS…FMIC.

The protein belongs to the complex I subunit 5 family.

The protein localises to the mitochondrion inner membrane. The catalysed reaction is a ubiquinone + NADH + 5 H(+)(in) = a ubiquinol + NAD(+) + 4 H(+)(out). In terms of biological role, core subunit of the mitochondrial membrane respiratory chain NADH dehydrogenase (Complex I) that is believed to belong to the minimal assembly required for catalysis. Complex I functions in the transfer of electrons from NADH to the respiratory chain. The immediate electron acceptor for the enzyme is believed to be ubiquinone. This Caenorhabditis elegans protein is NADH-ubiquinone oxidoreductase chain 5.